Reading from the N-terminus, the 196-residue chain is Pyridoxal 5'-phosphate synthase subunit PdxT (196 aa).

46-48 (GES) serves as a coordination point for L-glutamine. Catalysis depends on Cys-78, which acts as the Nucleophile. Residues Arg-105 and 133–134 (IR) contribute to the L-glutamine site. Active-site charge relay system residues include His-169 and Glu-171.

It belongs to the glutaminase PdxT/SNO family. As to quaternary structure, in the presence of PdxS, forms a dodecamer of heterodimers. Only shows activity in the heterodimer.

It catalyses the reaction aldehydo-D-ribose 5-phosphate + D-glyceraldehyde 3-phosphate + L-glutamine = pyridoxal 5'-phosphate + L-glutamate + phosphate + 3 H2O + H(+). The enzyme catalyses L-glutamine + H2O = L-glutamate + NH4(+). It functions in the pathway cofactor biosynthesis; pyridoxal 5'-phosphate biosynthesis. Its function is as follows. Catalyzes the hydrolysis of glutamine to glutamate and ammonia as part of the biosynthesis of pyridoxal 5'-phosphate. The resulting ammonia molecule is channeled to the active site of PdxS. The polypeptide is Pyridoxal 5'-phosphate synthase subunit PdxT (Geobacillus stearothermophilus (Bacillus stearothermophilus)).